A 234-amino-acid chain; its full sequence is Glycoprotein BDLF3 (234 aa).

Residues 1-28 form the signal peptide; sequence MAHARDKAGAVMAMILICETSLIWTSSG. A disordered region spans residues 29 to 62; it reads SSTASAGNVTGTTAVTTPSPSASGPSTNQSTTLT. Asn-36, Asn-56, Asn-77, Asn-96, Asn-101, Asn-110, Asn-127, Asn-144, and Asn-159 each carry an N-linked (GlcNAc...) asparagine; by host glycan. A disordered region spans residues 116-138; it reads AGTGTSTGVTSNVTTRSSSTTSA. Residues 187-207 traverse the membrane as a helical segment; that stretch reads LVFVGLTFLMLILIFAAGLMM.

Belongs to the Epstein-Barr virus BDLF3 protein family.

Its subcellular location is the membrane. The protein is Glycoprotein BDLF3 of Homo sapiens (Human).